Here is a 199-residue protein sequence, read N- to C-terminus: MNLPSPAPPTLVLASSSPYRAELLARLGLPFEICAPDIDETPLPQEQPEGLVARLAETKARVVGAKSPNALVIGSDQVAVLGQQILGKPKTHERALQQLRAASGQTVFFYTGLCLVNTLMGEAKTVVEPFQVQFRQLTEQQIDNYLQREQPYQCAGSFRSEGLGIALIQHLQGDDPNALVGLPLIRLTELLEQAGYPVL.

Aspartate 76 acts as the Proton acceptor in catalysis.

It belongs to the Maf family. YceF subfamily. The cofactor is a divalent metal cation.

Its subcellular location is the cytoplasm. The catalysed reaction is N(7)-methyl-GTP + H2O = N(7)-methyl-GMP + diphosphate + H(+). Nucleoside triphosphate pyrophosphatase that hydrolyzes 7-methyl-GTP (m(7)GTP). May have a dual role in cell division arrest and in preventing the incorporation of modified nucleotides into cellular nucleic acids. The protein is 7-methyl-GTP pyrophosphatase of Nitrosococcus oceani (strain ATCC 19707 / BCRC 17464 / JCM 30415 / NCIMB 11848 / C-107).